A 295-amino-acid chain; its full sequence is Alpha-ketoglutarate-dependent dioxygenase alkB homolog 3 (295 aa).

The segment at 1–48 (MGDKRQRARVQGAWATPTKSQSAARPATPARSRPSQTPGPSWRSKEQQ) is disordered. Positions 22–35 (SAARPATPARSRPS) are enriched in low complexity. Substrate-binding positions include W115 and 141 to 143 (YTY). The Fe2OG dioxygenase domain maps to 172–278 (TFNSLLCNFY…RVNLTFRTVY (107 aa)). The residue at position 177 (L177) is a (4R)-5-hydroxyleucine; alternate. L177 is subject to (4R)-5-oxoleucine; alternate. 179–181 (NFY) is a binding site for 2-oxoglutarate. 2 residues coordinate Fe cation: H191 and D193. Position 194 (D194) interacts with substrate. H257 is a Fe cation binding site. Residues 269-275 (RVNLTFR) and R275 contribute to the 2-oxoglutarate site.

It belongs to the alkB family. Interacts with the ASCC complex composed of ASCC1, ASCC2 and ASCC3. Interacts directly with ASCC3, and is thereby recruited to the ASCC complex. Interacts with OTUD4; the interaction is direct. Interacts with USP7 and USP9X. Requires Fe(2+) as cofactor. Ubiquitinated; undergoes 'Lys-48'-linked polyubiquitination. OTUD4 promotes USP7 and USP9X-dependent deubiquitination of 'Lys-48'-polyubiquitinated ALKBH3 promoting the repair of alkylated DNA lesions.

Its subcellular location is the nucleus. It localises to the cytoplasm. It carries out the reaction an N(1)-methyladenosine in mRNA + 2-oxoglutarate + O2 = an adenosine in mRNA + formaldehyde + succinate + CO2. It catalyses the reaction a methylated nucleobase within DNA + 2-oxoglutarate + O2 = a nucleobase within DNA + formaldehyde + succinate + CO2. The enzyme catalyses an N(1)-methyl-2'-deoxyadenosine in single-stranded DNA + 2-oxoglutarate + O2 = a 2'-deoxyadenosine in single-stranded DNA + formaldehyde + succinate + CO2 + H(+). The catalysed reaction is an N(3)-methyl-2'-deoxycytidine in single-stranded DNA + 2-oxoglutarate + O2 = a 2'-deoxycytidine in single-stranded DNA + formaldehyde + succinate + CO2 + H(+). It carries out the reaction a 3,N(4)-etheno-2'-deoxycytidine in single-stranded DNA + 2-oxoglutarate + O2 + H2O = a 2'-deoxycytidine in single-stranded DNA + glyoxal + succinate + CO2. With respect to regulation, activated by ascorbate. Its function is as follows. Dioxygenase that mediates demethylation of DNA and RNA containing 1-methyladenosine (m1A). Repairs alkylated DNA containing 1-methyladenosine (m1A) and 3-methylcytosine (m3C) by oxidative demethylation. Has a strong preference for single-stranded DNA. Able to process alkylated m3C within double-stranded regions via its interaction with ASCC3, which promotes DNA unwinding to generate single-stranded substrate needed for ALKBH3. Can repair exocyclic 3,N4-ethenocytosine adducs in single-stranded DNA. Also acts on RNA. Demethylates N(1)-methyladenosine (m1A) RNA, an epigenetic internal modification of messenger RNAs (mRNAs) highly enriched within 5'-untranslated regions (UTRs) and in the vicinity of start codons. Requires molecular oxygen, alpha-ketoglutarate and iron. The sequence is that of Alpha-ketoglutarate-dependent dioxygenase alkB homolog 3 from Rattus norvegicus (Rat).